The sequence spans 251 residues: NADPH-dependent oxidoreductase (251 aa).

Belongs to the flavin oxidoreductase frp family. FMN is required as a cofactor.

In terms of biological role, reduces FMN, organic nitro compounds and disulfide DTNB. Involved in maintenance of the cellular redox state and the disulfide stress response. This is NADPH-dependent oxidoreductase (nfrA) from Staphylococcus haemolyticus (strain JCSC1435).